Here is a 340-residue protein sequence, read N- to C-terminus: Heat-inducible transcription repressor HrcA (340 aa).

Belongs to the HrcA family.

Negative regulator of class I heat shock genes (grpE-dnaK-dnaJ and groELS operons). Prevents heat-shock induction of these operons. This chain is Heat-inducible transcription repressor HrcA, found in Burkholderia cenocepacia (strain HI2424).